Here is a 302-residue protein sequence, read N- to C-terminus: uncharacterized protein (302 aa).

Transmembrane regions (helical) follow at residues 3–23, 39–59, 77–97, 106–126, 128–148, 163–183, 199–219, 227–247, and 254–274; these read ILGV…SDWF, FVIG…LTSA, SCIC…PIIV, LVYL…FSWI, GVVL…NGSA, FSLV…ELFV, VIGF…VSLA, GMVL…ALAV, and LPAE…LYLF.

Belongs to the Ca(2+):cation antiporter (CaCA) (TC 2.A.19) family.

Its subcellular location is the cell membrane. This is an uncharacterized protein from Methanocaldococcus jannaschii (strain ATCC 43067 / DSM 2661 / JAL-1 / JCM 10045 / NBRC 100440) (Methanococcus jannaschii).